The following is a 600-amino-acid chain: MGKKLDLSKLTDEEAQHVLEVVQRDFDLRRKEEERLEALKGKIKKESSKRELLSDTAHLNETHCARCLQPYQLLVNSKRQCLECGLFTCKSCGRVHPEEQGWICDPCHLARVVKIGSLEWYYEHVKARFKRFGSAKVIRSLHGRLQGGAGPELISEERSGDSDQTDEDGEPGSEAQAQAQPFGSKKKRLLSVHDFDFEGDSDDSTQPQGHSLHLSSVPEARDSPQSLTDESCSEKAAPHKAEGLEEADTGASGCHSHPEEQPTSISPSRHGALAELCPPGGSHRMALGTAAALGSNVIRNEQLPLQYLADVDTSDEESIRAHVMASHHSKRRGRASSESQIFELNKHISAVECLLTYLENTVVPPLAKGLGAGVRTEADVEEEALRRKLEELTSNVSDQETSSEEEEAKDEKAEPNRDKSVGPLPQADPEVGTAAHQTNRQEKSPQDPGDPVQYNRTTDEELSELEDRVAVTASEVQQAESEVSDIESRIAALRAAGLTVKPSGKPRRKSNLPIFLPRVAGKLGKRPEDPNADPSSEAKAMAVPYLLRRKFSNSLKSQGKDDDSFDRKSVYRGSLTQRNPNARKGMASHTFAKPVVAHQS.

A RabBD domain is found at 4–124; sequence KLDLSKLTDE…IGSLEWYYEH (121 aa). The FYVE-type zinc finger occupies 64-107; the sequence is CARCLQPYQLLVNSKRQCLECGLFTCKSCGRVHPEEQGWICDPC. Disordered stretches follow at residues 146 to 277, 390 to 465, 499 to 541, and 553 to 600; these read QGGA…AELC, EELT…LSEL, TVKP…AKAM, and NSLK…AHQS. Basic and acidic residues-rich tracts occupy residues 232–243 and 409–420; these read CSEKAAPHKAEG and KDEKAEPNRDKS. Residues 373–496 adopt a coiled-coil conformation; it reads GVRTEADVEE…ESRIAALRAA (124 aa). A compositionally biased stretch (basic and acidic residues) spans 558-569; it reads QGKDDDSFDRKS.

Binds RAB27A that has been activated by GTP-binding via its N-terminus. Binds MYO5A via its C-terminal coiled coil domain.

The protein resides in the cytoplasm. In terms of biological role, rab effector protein involved in melanosome transport. Serves as link between melanosome-bound RAB27A and the motor protein MYO5A. This is Melanophilin (MLPH) from Homo sapiens (Human).